A 643-amino-acid chain; its full sequence is Threonine--tRNA ligase (643 aa).

One can recognise a TGS domain in the interval 1 to 61 (MPIITLPDGA…SVNANINIIT (61 aa)). Positions 242-533 (DHRKIGKKLD…LIEEYEGKFP (292 aa)) are catalytic. The Zn(2+) site is built by cysteine 333, histidine 384, and histidine 510.

Belongs to the class-II aminoacyl-tRNA synthetase family. In terms of assembly, homodimer. It depends on Zn(2+) as a cofactor.

It is found in the cytoplasm. The enzyme catalyses tRNA(Thr) + L-threonine + ATP = L-threonyl-tRNA(Thr) + AMP + diphosphate + H(+). Its function is as follows. Catalyzes the attachment of threonine to tRNA(Thr) in a two-step reaction: L-threonine is first activated by ATP to form Thr-AMP and then transferred to the acceptor end of tRNA(Thr). Also edits incorrectly charged L-seryl-tRNA(Thr). This Prochlorococcus marinus (strain SARG / CCMP1375 / SS120) protein is Threonine--tRNA ligase.